The chain runs to 344 residues: MLQALLDSKDFLALTLAHPEQFDGEFSFNLGDHTQVEVWDTGVIVFEPIQNEGKDIVLSCGVHGNETAPIELCNSLIKQLLQQKIIAKQRTLFLIGNPLAINNGTRIIDENMNRLFSGEHSNPPGLVNPERVRAKKLEAYVDRFFTAAADGRQRIHYDLHTAMRASKHEKFAIYPYRPGRAFSGEQIMFLAASGVDTVLFHHEPTTTFSYFSSERYGADAFTIELGKVYPMGQNDMTRFIATHEMFMRLITAKPLELDAFDADKVNLYQVCRVINKHFDDFEFTFATDVENFRSFPKGFVLAREGGQEIKVEHEFESVVFPNAKVPIGNRTVICLIPAVNADVR.

Positions 63, 66, and 160 each coordinate Zn(2+). Glutamate 224 is a catalytic residue.

The protein belongs to the AspA/AstE family. Succinylglutamate desuccinylase subfamily. Requires Zn(2+) as cofactor.

It catalyses the reaction N-succinyl-L-glutamate + H2O = L-glutamate + succinate. The protein operates within amino-acid degradation; L-arginine degradation via AST pathway; L-glutamate and succinate from L-arginine: step 5/5. Transforms N(2)-succinylglutamate into succinate and glutamate. The sequence is that of Succinylglutamate desuccinylase from Shewanella putrefaciens (strain CN-32 / ATCC BAA-453).